A 307-amino-acid polypeptide reads, in one-letter code: Ribosomal RNA small subunit methyltransferase H (307 aa).

S-adenosyl-L-methionine contacts are provided by residues 33–35 (GGH), D52, L83, D97, and Q104.

It belongs to the methyltransferase superfamily. RsmH family.

It is found in the cytoplasm. The enzyme catalyses cytidine(1402) in 16S rRNA + S-adenosyl-L-methionine = N(4)-methylcytidine(1402) in 16S rRNA + S-adenosyl-L-homocysteine + H(+). Specifically methylates the N4 position of cytidine in position 1402 (C1402) of 16S rRNA. The polypeptide is Ribosomal RNA small subunit methyltransferase H (Campylobacter fetus subsp. fetus (strain 82-40)).